A 204-amino-acid chain; its full sequence is Small ribosomal subunit protein uS3 (204 aa).

Residues 37–105 (IRSYINESFK…NVEVNVVGVK (69 aa)) form the KH type-2 domain.

It belongs to the universal ribosomal protein uS3 family. In terms of assembly, part of the 30S ribosomal subunit. Forms a tight complex with proteins S10 and S14.

Its function is as follows. Binds the lower part of the 30S subunit head. Binds mRNA in the 70S ribosome, positioning it for translation. The protein is Small ribosomal subunit protein uS3 of Wolbachia pipientis wMel.